A 172-amino-acid chain; its full sequence is MNLFASLNQFSKNRISWLLLLLFVVFFEGAALFFQHVMMLSPCVMCIYERVAMLGVGGAALFGLIAPNNPLVRWLGLAAWGASAYKGLALSLQHVDYQFNPSPFATCDLFVTFPDWAPLNQWAPWMFEAYGDCSKIVWQFMTLSMPQWLVIIFAGNLVALAFIVIAQFFKSK.

At 1 to 16 (MNLFASLNQFSKNRIS) the chain is on the cytoplasmic side. The helical transmembrane segment at 17-33 (WLLLLLFVVFFEGAALF) threads the bilayer. Residues 34–51 (FQHVMMLSPCVMCIYERV) are Periplasmic-facing. Residues Cys-43 and Cys-46 are joined by a disulfide bond. A helical membrane pass occupies residues 52-67 (AMLGVGGAALFGLIAP). The Cytoplasmic segment spans residues 68–74 (NNPLVRW). The chain crosses the membrane as a helical span at residues 75–92 (LGLAAWGASAYKGLALSL). The Periplasmic segment spans residues 93–147 (QHVDYQFNPSPFATCDLFVTFPDWAPLNQWAPWMFEAYGDCSKIVWQFMTLSMPQ). Cys-107 and Cys-133 are oxidised to a cystine. A helical transmembrane segment spans residues 148–166 (WLVIIFAGNLVALAFIVIA). At 167-172 (QFFKSK) the chain is on the cytoplasmic side.

Belongs to the DsbB family.

It is found in the cell inner membrane. Its function is as follows. Required for disulfide bond formation in some periplasmic proteins. Acts by oxidizing the DsbA protein. This Vibrio vulnificus (strain CMCP6) protein is Disulfide bond formation protein B.